A 147-amino-acid polypeptide reads, in one-letter code: Leech anti-platelet protein (147 aa).

A signal peptide spans 1-21 (MNSFLFSLACSLLVAIPAISA). The tract at residues 21–71 (AQDEDAGGAGDETSEGEDTTGSDETPSTGGGGDGGNEETITAGNEDCWSKR) is disordered. Acidic residues predominate over residues 22–41 (QDEDAGGAGDETSEGEDTTG). Cystine bridges form between Cys67-Cys145, Cys92-Cys117, and Cys96-Cys105.

The N-terminus is blocked. In terms of tissue distribution, expressed by salivary glands.

The protein resides in the secreted. Functionally, inhibits collagen-stimulated platelet aggregation (IC(50)=60 nM), dense granule release and serotonin release. Does not inhibit platelet aggregation induced by ADP, arachidonic acid, and thrombin. This is Leech anti-platelet protein from Haementeria officinalis (Mexican leech).